The sequence spans 489 residues: Probable cytochrome P450 522A1 (489 aa).

The chain crosses the membrane as a helical span at residues 1 to 21; sequence MILTIVIIILTVIFVNKYLLN. Residue C433 participates in heme binding.

It belongs to the cytochrome P450 family. It depends on heme as a cofactor.

Its subcellular location is the membrane. In Dictyostelium discoideum (Social amoeba), this protein is Probable cytochrome P450 522A1 (cyp522A1).